The chain runs to 32 residues: Cytochrome b6-f complex subunit 6 (32 aa).

The helical transmembrane segment at 4–26 (ITSYVGLLFTALGFTLGLYFGLT) threads the bilayer.

It belongs to the PetL family. The 4 large subunits of the cytochrome b6-f complex are cytochrome b6, subunit IV (17 kDa polypeptide, PetD), cytochrome f and the Rieske protein, while the 4 small subunits are PetG, PetL, PetM and PetN. The complex functions as a dimer.

It is found in the plastid. It localises to the chloroplast thylakoid membrane. Functionally, component of the cytochrome b6-f complex, which mediates electron transfer between photosystem II (PSII) and photosystem I (PSI), cyclic electron flow around PSI, and state transitions. PetL is important for photoautotrophic growth as well as for electron transfer efficiency and stability of the cytochrome b6-f complex. This chain is Cytochrome b6-f complex subunit 6, found in Tetradesmus obliquus (Green alga).